The following is a 963-amino-acid chain: Unconventional myosin-XIX (963 aa).

The region spanning 35 to 758 is the Myosin motor domain; the sequence is HQLDDLTKVN…MLELLECGRA (724 aa). ATP is bound at residue 132–139; it reads GESGAGKT. Residues 602–624 are actin-binding; the sequence is LEQLLQVLHNTTPHYIRCIKPNS. IQ domains follow at residues 762–782 and 783–812; these read EQCA…KQEK and QRRA…AATV. Residues 829–963 are myMOMA region; sequence SKELDGMEEK…LLESHRPVQV (135 aa).

It belongs to the TRAFAC class myosin-kinesin ATPase superfamily. Myosin family. As to quaternary structure, myosin is a hexamer of 2 heavy chains and 4 light chains: interacts with myosin light chains MYL9 and MYL12B.

Its subcellular location is the mitochondrion outer membrane. It localises to the cytoplasm. It is found in the cytoskeleton. Functionally, actin-based motor molecule with ATPase activity that localizes to the mitochondrion outer membrane. Motor protein that moves towards the plus-end of actin filaments. Required for mitochondrial inheritance during mitosis. May be involved in mitochondrial transport or positioning. The sequence is that of Unconventional myosin-XIX from Mus musculus (Mouse).